Reading from the N-terminus, the 480-residue chain is Protein nucleotidyltransferase YdiU (480 aa).

Residues glycine 86, glycine 88, arginine 89, lysine 109, aspartate 121, glycine 122, arginine 172, and arginine 179 each coordinate ATP. Aspartate 248 acts as the Proton acceptor in catalysis. Positions 249 and 258 each coordinate Mg(2+). Aspartate 258 is a binding site for ATP.

It belongs to the SELO family. Mg(2+) serves as cofactor. Mn(2+) is required as a cofactor.

The catalysed reaction is L-seryl-[protein] + ATP = 3-O-(5'-adenylyl)-L-seryl-[protein] + diphosphate. It catalyses the reaction L-threonyl-[protein] + ATP = 3-O-(5'-adenylyl)-L-threonyl-[protein] + diphosphate. The enzyme catalyses L-tyrosyl-[protein] + ATP = O-(5'-adenylyl)-L-tyrosyl-[protein] + diphosphate. It carries out the reaction L-histidyl-[protein] + UTP = N(tele)-(5'-uridylyl)-L-histidyl-[protein] + diphosphate. The catalysed reaction is L-seryl-[protein] + UTP = O-(5'-uridylyl)-L-seryl-[protein] + diphosphate. It catalyses the reaction L-tyrosyl-[protein] + UTP = O-(5'-uridylyl)-L-tyrosyl-[protein] + diphosphate. Functionally, nucleotidyltransferase involved in the post-translational modification of proteins. It can catalyze the addition of adenosine monophosphate (AMP) or uridine monophosphate (UMP) to a protein, resulting in modifications known as AMPylation and UMPylation. This is Protein nucleotidyltransferase YdiU from Salmonella paratyphi B (strain ATCC BAA-1250 / SPB7).